The sequence spans 134 residues: Transcription antitermination protein NusB (134 aa).

Belongs to the NusB family.

Involved in transcription antitermination. Required for transcription of ribosomal RNA (rRNA) genes. Binds specifically to the boxA antiterminator sequence of the ribosomal RNA (rrn) operons. This is Transcription antitermination protein NusB from Shewanella sediminis (strain HAW-EB3).